The sequence spans 349 residues: MSTLELHHIGKSYQSVMVLDRIDLHVPPGSRTAIVGPSGSGKTTLLRIIAGFETPDAGKVILQGKAMFDGTTYVPAHKRGIGFVPQDGALFPHFTVAGNIGYGLKGSQRDKERRINELMDMVALDRRLSALWPHEISGGQQQRVALARALAQRPVLMLLDEPFSALDTALRASTRKAVAELLSEANIASILVTHDQTEALSFADQVAVMRAGKLAHVGPPQELYLRPVDEPTATFLGETLMLTAQLGTGLAHCALGQVKVDNPHRRGEARIMLRPEQITLTPLRPEQYNAASCLAKVVAIDFAGFISTLTLQIISSGETIEIKTISREDLHVGLTVGLDIMGQAHIFAE.

An ABC transporter domain is found at 4-236; it reads LELHHIGKSY…PVDEPTATFL (233 aa). 36 to 43 lines the ATP pocket; the sequence is GPSGSGKT.

The protein belongs to the ABC transporter superfamily. Fe(3+) ion importer (TC 3.A.1.10) family. As to quaternary structure, the complex is composed of two ATP-binding proteins (FbpC), two transmembrane proteins (FbpB) and a solute-binding protein (FbpA).

The protein localises to the cell inner membrane. The catalysed reaction is Fe(3+)(out) + ATP + H2O = Fe(3+)(in) + ADP + phosphate + H(+). In terms of biological role, part of the ABC transporter complex FbpABC involved in Fe(3+) ions import. Responsible for energy coupling to the transport system. This Yersinia pseudotuberculosis serotype I (strain IP32953) protein is Fe(3+) ions import ATP-binding protein FbpC.